Reading from the N-terminus, the 98-residue chain is NADH-ubiquinone oxidoreductase chain 4L (98 aa).

Helical transmembrane passes span 1-21 (MSMM…GLLM), 29-49 (SLLC…VTIL), and 61-81 (IILL…LVMV).

It belongs to the complex I subunit 4L family. In terms of assembly, core subunit of respiratory chain NADH dehydrogenase (Complex I) which is composed of 45 different subunits.

The protein resides in the mitochondrion inner membrane. It catalyses the reaction a ubiquinone + NADH + 5 H(+)(in) = a ubiquinol + NAD(+) + 4 H(+)(out). In terms of biological role, core subunit of the mitochondrial membrane respiratory chain NADH dehydrogenase (Complex I) which catalyzes electron transfer from NADH through the respiratory chain, using ubiquinone as an electron acceptor. Part of the enzyme membrane arm which is embedded in the lipid bilayer and involved in proton translocation. The protein is NADH-ubiquinone oxidoreductase chain 4L (MT-ND4L) of Zalophus californianus (California sealion).